Consider the following 533-residue polypeptide: CTP synthase (533 aa).

The segment at 1-269 (MKKNLKILVI…HEILSSKLNI (269 aa)) is amidoligase domain. S16 contacts CTP. UTP is bound at residue S16. ATP is bound by residues 17-22 (GIGKGV) and D73. The Mg(2+) site is built by D73 and E143. CTP is bound by residues 150–152 (DME), 190–195 (KSKPTQ), and K226. Residues 190-195 (KSKPTQ) and K226 each bind UTP. A Glutamine amidotransferase type-1 domain is found at 304–533 (YAELDDSYAS…LFLGLIKACI (230 aa)). G355 is an L-glutamine binding site. C382 serves as the catalytic Nucleophile; for glutamine hydrolysis. L-glutamine contacts are provided by residues 383–386 (LGLQ), E406, and R466. Residues H511 and E513 contribute to the active site.

It belongs to the CTP synthase family. In terms of assembly, homotetramer.

It carries out the reaction UTP + L-glutamine + ATP + H2O = CTP + L-glutamate + ADP + phosphate + 2 H(+). It catalyses the reaction L-glutamine + H2O = L-glutamate + NH4(+). The enzyme catalyses UTP + NH4(+) + ATP = CTP + ADP + phosphate + 2 H(+). The protein operates within pyrimidine metabolism; CTP biosynthesis via de novo pathway; CTP from UDP: step 2/2. Its activity is regulated as follows. Allosterically activated by GTP, when glutamine is the substrate; GTP has no effect on the reaction when ammonia is the substrate. The allosteric effector GTP functions by stabilizing the protein conformation that binds the tetrahedral intermediate(s) formed during glutamine hydrolysis. Inhibited by the product CTP, via allosteric rather than competitive inhibition. In terms of biological role, catalyzes the ATP-dependent amination of UTP to CTP with either L-glutamine or ammonia as the source of nitrogen. Regulates intracellular CTP levels through interactions with the four ribonucleotide triphosphates. This chain is CTP synthase, found in Borreliella burgdorferi (strain ATCC 35210 / DSM 4680 / CIP 102532 / B31) (Borrelia burgdorferi).